The chain runs to 83 residues: Toxin To12 (83 aa).

A signal peptide spans 1 to 19 (MKGLILFICGFMMIGVILA). The 63-residue stretch at 20–82 (KEGYPMDHEG…VWDYYNNKCG (63 aa)) folds into the LCN-type CS-alpha/beta domain. 4 cysteine pairs are disulfide-bonded: Cys-30-Cys-81, Cys-34-Cys-57, Cys-42-Cys-62, and Cys-46-Cys-64. Cys-81 bears the Cysteine amide mark.

It belongs to the long (4 C-C) scorpion toxin superfamily. Sodium channel inhibitor family. Beta subfamily. Expressed by the venom gland.

The protein resides in the secreted. Its function is as follows. Beta toxins bind voltage-independently at site-4 of sodium channels (Nav) and shift the voltage of activation toward more negative potentials thereby affecting sodium channel activation and promoting spontaneous and repetitive firing. The sequence is that of Toxin To12 from Tityus obscurus (Amazonian scorpion).